Consider the following 137-residue polypeptide: Large-conductance mechanosensitive channel (137 aa).

A run of 2 helical transmembrane segments spans residues 14–34 (VLDLAVGVIIGAAFTAIINSL) and 81–101 (GSFLNAVINFLLVAFVIFLIV).

The protein belongs to the MscL family. Homopentamer.

The protein localises to the cell membrane. Functionally, channel that opens in response to stretch forces in the membrane lipid bilayer. May participate in the regulation of osmotic pressure changes within the cell. The chain is Large-conductance mechanosensitive channel from Chloroflexus aggregans (strain MD-66 / DSM 9485).